The sequence spans 22 residues: GMASTAGSVLGKLAKAVAIGAL.

Residue Leu22 is modified to Leucine amide.

In terms of tissue distribution, expressed by the skin glands.

It is found in the secreted. Functionally, antimicrobial peptide. In Xenopus boumbaensis (Mawa clawed frog), this protein is Peptide PGLa-BM3.